A 481-amino-acid chain; its full sequence is Proline--tRNA ligase (481 aa).

It belongs to the class-II aminoacyl-tRNA synthetase family. ProS type 3 subfamily. As to quaternary structure, homodimer.

The protein resides in the cytoplasm. It carries out the reaction tRNA(Pro) + L-proline + ATP = L-prolyl-tRNA(Pro) + AMP + diphosphate. Its function is as follows. Catalyzes the attachment of proline to tRNA(Pro) in a two-step reaction: proline is first activated by ATP to form Pro-AMP and then transferred to the acceptor end of tRNA(Pro). This chain is Proline--tRNA ligase, found in Chlorobaculum tepidum (strain ATCC 49652 / DSM 12025 / NBRC 103806 / TLS) (Chlorobium tepidum).